An 83-amino-acid polypeptide reads, in one-letter code: MPKPDIHPTWYPDAKVICNGEVVMTTGATQPEIHVDVWSGNHPFFTGTQKILDTEGRVDRFMKKYGMGTKKKGADSAKAESKA.

Belongs to the bacterial ribosomal protein bL31 family. Type A subfamily. As to quaternary structure, part of the 50S ribosomal subunit.

Binds the 23S rRNA. In Synechococcus sp. (strain CC9605), this protein is Large ribosomal subunit protein bL31.